The sequence spans 1372 residues: Collagen alpha-2(I) chain (1372 aa).

An N-terminal signal peptide occupies residues 1 to 22 (MLSFVDTRTLLLLAVTSCLATC). The residue at position 23 (Q23) is a Pyrrolidone carboxylic acid. Positions 23–85 (QSLQMGSVRK…PPGLTGNFAA (63 aa)) are cleaved as a propeptide — N-terminal propeptide. Residues 28–1135 (GSVRKGPTGD…DQPRSQPSLR (1108 aa)) are disordered. Pro residues predominate over residues 59–77 (VGPPGPPGAPGPPGPPGPP). Pyrrolidone carboxylic acid is present on Q86. The residue at position 90 (K90) is an Allysine. Positions 95 to 146 (GPGPMGLMGPRGPPGAVGAPGPQGFQGPAGEPGEPGQTGPAGSRGPAGPPGK) are enriched in low complexity. Positions 147–161 (AGEDGHPGKPGRPGE) are enriched in basic and acidic residues. K183 is modified (5-hydroxylysine; alternate). An O-linked (Gal...) hydroxylysine; alternate glycan is attached at K183. Composition is skewed to low complexity over residues 231-260 (VGAP…SAGP), 285-299 (AGPR…LSGP), 306-327 (PGAN…AGAP), 336-348 (PGPV…TGPR), 390-416 (PGEP…LPGA), 476-495 (LPGI…RGEA), and 519-537 (PGLA…NGAQ). Residues 544 to 553 (GVQGGKGEQG) show a composition bias toward gly residues. Low complexity predominate over residues 600 to 639 (PGESGAAGPSGPIGIRGPSGAPGPDGNKGEAGAVGAPGSA). Positions 640-649 (GASGPGGLPG) are enriched in gly residues. 2 stretches are compositionally biased toward low complexity: residues 674–716 (NPGR…PRGS) and 725–743 (PAGP…QPGA). Positions 744 to 753 (KGEKGTKGPK) are enriched in basic and acidic residues. Residues 755 to 771 (ENGIVGPTGPVGAAGPS) show a composition bias toward low complexity. The segment covering 781–790 (GSRGDGGPPG) has biased composition (gly residues). Residues 783–785 (RGD) carry the Cell attachment site motif. Low complexity predominate over residues 792–801 (TGFPGAAGRT). The short motif at 828 to 830 (RGD) is the Cell attachment site element. 4 stretches are compositionally biased toward low complexity: residues 855-882 (SGEP…LGLP), 891-927 (PGIA…NGAP), 957-978 (PGNI…VGPA), and 987-1007 (PGPA…PSGP). The Cell attachment site motif lies at 1011 to 1013 (RGD). Positions 1011–1022 (RGDKGEPGDKGA) are enriched in basic and acidic residues. A compositionally biased stretch (pro residues) spans 1095 to 1107 (AGPPGPPGPPGPP). A compositionally biased stretch (gly residues) spans 1108–1120 (GVSGGGYDFGFEG). Positions 1126–1372 (DQPRSQPSLR…RVEVGPVCFK (247 aa)) are cleaved as a propeptide — C-terminal propeptide. A Fibrillar collagen NC1 domain is found at 1139–1372 (YEVDATLKSL…RVEVGPVCFK (234 aa)). 3 disulfides stabilise this stretch: C1169-C1201, C1209-C1370, and C1278-C1323. Residues D1187, N1189, Q1190, C1192, and D1195 each contribute to the Ca(2+) site. N1273 carries N-linked (GlcNAc...) asparagine glycosylation.

It belongs to the fibrillar collagen family. In terms of assembly, trimers of one alpha 2(I) and two alpha 1(I) chains. Interacts (via C-terminus) with TMEM131 (via PapD-L domain); the interaction is direct and is involved in assembly and TRAPPIII ER-to-Golgi transport complex-dependent secretion of collagen. In terms of processing, proline residues at the third position of the tripeptide repeating unit (G-X-P) are hydroxylated in some or all of the chains. Proline residues at the second position of the tripeptide repeating unit (G-P-X) are hydroxylated in some of the chains. As to expression, forms the fibrils of tendon, ligaments and bones. In bones the fibrils are mineralized with calcium hydroxyapatite. Expressed in flagella of epididymal sperm.

The protein resides in the secreted. It is found in the extracellular space. The protein localises to the extracellular matrix. In terms of biological role, type I collagen is a member of group I collagen (fibrillar forming collagen). The chain is Collagen alpha-2(I) chain (Col1a2) from Rattus norvegicus (Rat).